The primary structure comprises 134 residues: Profilin-2 (134 aa).

Cysteine 13 and cysteine 118 are joined by a disulfide. Positions alanine 84 to threonine 100 match the Involved in PIP2 interaction motif. Threonine 114 bears the Phosphothreonine mark.

It belongs to the profilin family. Occurs in many kinds of cells as a complex with monomeric actin in a 1:1 ratio. Phosphorylated by MAP kinases.

The protein localises to the cytoplasm. It is found in the cytoskeleton. In terms of biological role, binds to actin and affects the structure of the cytoskeleton. At high concentrations, profilin prevents the polymerization of actin, whereas it enhances it at low concentrations. The polypeptide is Profilin-2 (Olea europaea (Common olive)).